An 84-amino-acid chain; its full sequence is Small ribosomal subunit protein bS16 (84 aa).

This sequence belongs to the bacterial ribosomal protein bS16 family.

This Paraburkholderia phymatum (strain DSM 17167 / CIP 108236 / LMG 21445 / STM815) (Burkholderia phymatum) protein is Small ribosomal subunit protein bS16.